A 632-amino-acid chain; its full sequence is MTQQTMSFQAEVKQLLHLMIHSLYSNKEIFLRELVSNASDAADKLRFEALENNALYESDPNLRIRLSFDKAARTITIDDNGIGMSRDEAIANLGTIARSGTKEFFSKLSGDQQKDAALIGQFGVGFYSGFIVADRITVETRRAGLPASEGVRWESAGEGDFQVDTIERAARGTTITLHLREGEDELLSSYRLKSIVQKYSDHVALPILMKKEEWDQEKGEMVEKDEDETINQASALWTRAKSEVTDEQYKQFYQHVAHDHQDPLAWTHNRVEGRSEYTQLLFVPSHAPFDLWNRDYRGGLKLYVKRVFIMDDAEQLLPQYLRFIKGVVDSSDLPLNVSREILQESRDVKAIREGVTKRALSMLEELANAEDDAGKEKYKTFWSAFGQVLKEGIGEDHANRERVAKLLRFASTHGDTDAQDVALADYVARMKPEQTKIYYVTADTWQAAKNSPHLEVFRKKGVEVLLLTDRVDEWMLSFLHEFDGKPLASVARGDLDLGALNDDEKKAQEETGEAMKPVVDKMKETLGEKVKDVRVTFRLTDSPSCLVADDNDMSGYLQRMLKAAGQSAPSFQPILEINPEHPLVKALKADGADFGDWCHLLFDQALLAEGGALEDPASFVKRTNALLLSRAA.

Residues 1 to 339 (MTQQTMSFQA…SSDLPLNVSR (339 aa)) form an a; substrate-binding region. A b region spans residues 340–559 (EILQESRDVK…DNDMSGYLQR (220 aa)). Residues 560–632 (MLKAAGQSAP…TNALLLSRAA (73 aa)) are c.

It belongs to the heat shock protein 90 family. As to quaternary structure, homodimer.

The protein resides in the cytoplasm. Functionally, molecular chaperone. Has ATPase activity. The sequence is that of Chaperone protein HtpG from Burkholderia pseudomallei (strain 668).